Reading from the N-terminus, the 510-residue chain is NAD(P)H-quinone oxidoreductase subunit 2, chloroplastic (510 aa).

Helical transmembrane passes span 26–46, 57–77, 99–119, 124–144, 149–169, 184–204, 227–247, 295–315, 323–343, 354–374, 395–415, 418–438, and 484–504; these read LFDG…ILLL, IPWL…ALLF, IFQV…VEYI, MAIT…MFLC, LITI…LSGY, LLMG…LYGL, PGIS…LSPA, WHLL…LIAI, MLAY…IVGD, YMLF…LFGL, ALSL…AGFF, LYLF…IALV, and MIVC…IIAI.

This sequence belongs to the complex I subunit 2 family. In terms of assembly, NDH is composed of at least 16 different subunits, 5 of which are encoded in the nucleus.

The protein localises to the plastid. The protein resides in the chloroplast thylakoid membrane. The enzyme catalyses a plastoquinone + NADH + (n+1) H(+)(in) = a plastoquinol + NAD(+) + n H(+)(out). It catalyses the reaction a plastoquinone + NADPH + (n+1) H(+)(in) = a plastoquinol + NADP(+) + n H(+)(out). NDH shuttles electrons from NAD(P)H:plastoquinone, via FMN and iron-sulfur (Fe-S) centers, to quinones in the photosynthetic chain and possibly in a chloroplast respiratory chain. The immediate electron acceptor for the enzyme in this species is believed to be plastoquinone. Couples the redox reaction to proton translocation, and thus conserves the redox energy in a proton gradient. The chain is NAD(P)H-quinone oxidoreductase subunit 2, chloroplastic from Trachelium caeruleum (Blue throatwort).